Consider the following 160-residue polypeptide: Ribosomal RNA large subunit methyltransferase H (160 aa).

S-adenosyl-L-methionine contacts are provided by residues L76, G108, and 127–132 (LGELTW).

Belongs to the RNA methyltransferase RlmH family. In terms of assembly, homodimer.

The protein localises to the cytoplasm. The enzyme catalyses pseudouridine(1915) in 23S rRNA + S-adenosyl-L-methionine = N(3)-methylpseudouridine(1915) in 23S rRNA + S-adenosyl-L-homocysteine + H(+). Specifically methylates the pseudouridine at position 1915 (m3Psi1915) in 23S rRNA. In Brucella anthropi (strain ATCC 49188 / DSM 6882 / CCUG 24695 / JCM 21032 / LMG 3331 / NBRC 15819 / NCTC 12168 / Alc 37) (Ochrobactrum anthropi), this protein is Ribosomal RNA large subunit methyltransferase H.